The chain runs to 186 residues: MKFATLAGKFLIAVPSLADPFFERTVLYLCAHNEDGALGLVINQPLDTTMSQMAGYLELDWQRPGVDRVYMGGPVSPEQGFVLFEQALDLPGIMMLPDDLYMGTNPDIIRLMGRAGAQERFLFALGYAGWEAGQLEHELQENSWLVCDAQRSILFDMGYAQRWEAAIRSMGIDPALLVDASHGFAN.

It belongs to the UPF0301 (AlgH) family.

This Magnetococcus marinus (strain ATCC BAA-1437 / JCM 17883 / MC-1) protein is UPF0301 protein Mmc1_0726.